The primary structure comprises 796 residues: Leucine--tRNA ligase (796 aa).

Positions 40-51 (PYPSASGLHVGH) match the 'HIGH' region motif. A 'KMSKS' region motif is present at residues 569–573 (KMSKS). Lys-572 is a binding site for ATP.

It belongs to the class-I aminoacyl-tRNA synthetase family.

It is found in the cytoplasm. The enzyme catalyses tRNA(Leu) + L-leucine + ATP = L-leucyl-tRNA(Leu) + AMP + diphosphate. The protein is Leucine--tRNA ligase of Bdellovibrio bacteriovorus (strain ATCC 15356 / DSM 50701 / NCIMB 9529 / HD100).